A 311-amino-acid chain; its full sequence is Putative ankyrin repeat protein RF_0923 (311 aa).

ANK repeat units lie at residues 42–71 (IDNT…EQAI), 77–106 (NGNT…PQAI), 112–141 (NGNT…PQAI), 147–176 (NGNT…EQAI), and 182–213 (KGCT…AINH).

This Rickettsia felis (strain ATCC VR-1525 / URRWXCal2) (Rickettsia azadi) protein is Putative ankyrin repeat protein RF_0923.